We begin with the raw amino-acid sequence, 364 residues long: Tyrosine-protein phosphatase YVH1 (364 aa).

One can recognise a Tyrosine-protein phosphatase domain in the interval 11–173 (EVTRILGGIY…LHLFEKMGGD (163 aa)). Cys117 acts as the Phosphocysteine intermediate in catalysis. Ser196 is subject to Phosphoserine.

This sequence belongs to the protein-tyrosine phosphatase family. Non-receptor class dual specificity subfamily.

It carries out the reaction O-phospho-L-tyrosyl-[protein] + H2O = L-tyrosyl-[protein] + phosphate. Functionally, may be directly involved in signal transduction and/or cell cycle regulation. It is necessary for maintaining growth rate or spore germination. Could show both activity toward tyrosine-protein phosphate as well as with serine-protein phosphate. This chain is Tyrosine-protein phosphatase YVH1 (YVH1), found in Saccharomyces cerevisiae (strain ATCC 204508 / S288c) (Baker's yeast).